Reading from the N-terminus, the 564-residue chain is Urocanate hydratase (564 aa).

NAD(+) contacts are provided by residues 54–55 (GG), Q132, 178–180 (GMG), E198, R203, 244–245 (NA), 269–273 (QTSAH), 279–280 (YL), and Y328. Residue C416 is part of the active site. NAD(+) is bound at residue G498.

It belongs to the urocanase family. As to quaternary structure, homodimer. NAD(+) serves as cofactor.

It carries out the reaction 4-imidazolone-5-propanoate = trans-urocanate + H2O. The protein operates within amino-acid degradation; L-histidine degradation into L-glutamate; N-formimidoyl-L-glutamate from L-histidine: step 2/3. The protein is Urocanate hydratase of Trifolium repens (Creeping white clover).